Here is a 503-residue protein sequence, read N- to C-terminus: Glycerol kinase (503 aa).

Thr14 provides a ligand contact to ADP. ATP-binding residues include Thr14, Thr15, and Ser16. Thr14 lines the sn-glycerol 3-phosphate pocket. Arg18 provides a ligand contact to ADP. Sn-glycerol 3-phosphate contacts are provided by Arg84, Glu85, Tyr136, and Asp246. Positions 84, 85, 136, 246, and 247 each coordinate glycerol. Residues Thr268 and Gly311 each coordinate ADP. Residues Thr268, Gly311, Gln315, and Gly412 each contribute to the ATP site. Residues Gly412 and Asn416 each coordinate ADP.

This sequence belongs to the FGGY kinase family.

It catalyses the reaction glycerol + ATP = sn-glycerol 3-phosphate + ADP + H(+). It functions in the pathway polyol metabolism; glycerol degradation via glycerol kinase pathway; sn-glycerol 3-phosphate from glycerol: step 1/1. Its activity is regulated as follows. Inhibited by fructose 1,6-bisphosphate (FBP). Its function is as follows. Key enzyme in the regulation of glycerol uptake and metabolism. Catalyzes the phosphorylation of glycerol to yield sn-glycerol 3-phosphate. This chain is Glycerol kinase, found in Haemophilus influenzae (strain 86-028NP).